The following is a 378-amino-acid chain: Lipid-A-disaccharide synthase (378 aa).

Belongs to the LpxB family.

It carries out the reaction a lipid X + a UDP-2-N,3-O-bis[(3R)-3-hydroxyacyl]-alpha-D-glucosamine = a lipid A disaccharide + UDP + H(+). It participates in bacterial outer membrane biogenesis; LPS lipid A biosynthesis. Functionally, condensation of UDP-2,3-diacylglucosamine and 2,3-diacylglucosamine-1-phosphate to form lipid A disaccharide, a precursor of lipid A, a phosphorylated glycolipid that anchors the lipopolysaccharide to the outer membrane of the cell. The sequence is that of Lipid-A-disaccharide synthase from Methylobacillus flagellatus (strain ATCC 51484 / DSM 6875 / VKM B-1610 / KT).